Reading from the N-terminus, the 347-residue chain is Protein-glutamate methylesterase/protein-glutamine glutaminase 3 (347 aa).

The Response regulatory domain maps to 3–120 (QVFIVDDSAV…KNFLEESEIL (118 aa)). Asp54 carries the 4-aspartylphosphate modification. One can recognise a CheB-type methylesterase domain in the interval 159–347 (IDTTDKLIAI…SKIVGEVQYF (189 aa)). Catalysis depends on residues Ser171, His197, and Asp293.

It belongs to the CheB family. Phosphorylated by CheA. Phosphorylation of the N-terminal regulatory domain activates the methylesterase activity.

The protein resides in the cytoplasm. It catalyses the reaction [protein]-L-glutamate 5-O-methyl ester + H2O = L-glutamyl-[protein] + methanol + H(+). The catalysed reaction is L-glutaminyl-[protein] + H2O = L-glutamyl-[protein] + NH4(+). Involved in chemotaxis. Part of a chemotaxis signal transduction system that modulates chemotaxis in response to various stimuli. Catalyzes the demethylation of specific methylglutamate residues introduced into the chemoreceptors (methyl-accepting chemotaxis proteins or MCP) by CheR. Also mediates the irreversible deamidation of specific glutamine residues to glutamic acid. The protein is Protein-glutamate methylesterase/protein-glutamine glutaminase 3 of Leptospira interrogans serogroup Icterohaemorrhagiae serovar copenhageni (strain Fiocruz L1-130).